Reading from the N-terminus, the 907-residue chain is Glutamate receptor 1 (907 aa).

The signal sequence occupies residues 1–18; the sequence is MPYIFAFFCTGFLGAVVG. At 19–536 the chain is on the extracellular side; that stretch reads ANFPNNIQIG…GVFSFLDPLA (518 aa). Residues asparagine 63, asparagine 249, asparagine 257, asparagine 363, asparagine 401, and asparagine 406 are each glycosylated (N-linked (GlcNAc...) asparagine). Residues cysteine 75 and cysteine 323 are joined by a disulfide bond. L-glutamate-binding residues include proline 492, threonine 494, and arginine 499. Residues 537-557 form a helical membrane-spanning segment; it reads YEIWMCIVFAYIGVSVVLFLV. Residues 558 to 584 lie on the Cytoplasmic side of the membrane; it reads SRFSPYEWHSEEFEEGRDQTTSDQSNE. Positions 585-600 form an intramembrane region, helical; Pore-forming; the sequence is FGIFNSLWFSLGAFMQ. An intramembrane segment occupies 601–603; it reads QGC. A lipid anchor (S-palmitoyl cysteine) is attached at cysteine 603. The Cytoplasmic segment spans residues 604–609; sequence DISPRS. The chain crosses the membrane as a helical span at residues 610–630; sequence LSGRIVGGVWWFFTLIIISSY. At 631-805 the chain is on the extracellular side; sequence TANLAAFLTV…DKTSALSLSN (175 aa). Phosphoserine is present on serine 645. L-glutamate-binding residues include serine 668 and threonine 669. The residue at position 710 (serine 710) is a Phosphoserine. Glutamate 719 serves as a coordination point for L-glutamate. A disulfide bond links cysteine 732 and cysteine 787. A helical membrane pass occupies residues 806 to 826; that stretch reads VAGVFYILIGGLGLAMLVALI. Over 827–907 the chain is Cytoplasmic; sequence EFCYKSRSES…SGMPLGATGL (81 aa). Cysteine 829 carries S-palmitoyl cysteine lipidation. Serine 849 and serine 863 each carry phosphoserine. Positions 857 to 881 are disordered; it reads STLPRNSGAGASGGSGSGENGRVVS. Over residues 866–875 the composition is skewed to gly residues; the sequence is GASGGSGSGE. A PDZ-binding motif is present at residues 904–907; it reads ATGL.

Belongs to the glutamate-gated ion channel (TC 1.A.10.1) family. GRIA1 subfamily. In terms of assembly, homotetramer or heterotetramer of pore-forming glutamate receptor subunits. Heteromeric assembly can be the result of both receptor subtype and flip or flop form and according the composition, one partner can be dominant with respect to the fast desensitizing current component, whereas the other can determine the steady-state component. Tetramers may be formed by the dimerization of dimers. Found in a complex with GRIA2, GRIA3, GRIA4, CNIH2, CNIH3, CACNG2, CACNG3, CACNG4, CACNG5, CACNG7 and CACNG8. Interacts with HIP1 and RASGRF2. Interacts with SYNDIG1 and GRIA2. Interacts with DLG1 (via C-terminus). Interacts with LRFN1. Interacts with PRKG2. Interacts with CNIH2 and CACNG2. Interacts with CACNG5; this interaction modulates the gating. Interacts (via C-terminus) with PDLIM4 (via LIM domain); this interaction as well as the interaction of PDLIM4 with alpha-actinin is required for their colocalization in early endosomes. Interacts with SNX27 (via PDZ domain); the interaction is required for recycling to the plasma membrane when endocytosed and prevent degradation in lysosomes. Interacts (via PDZ-binding motif) with SHANK3 (via PDZ domain). Interacts with CACNG3; associates GRIA1 with the adapter protein complex 4 (AP-4) to target GRIA1 to the somatodendritic compartment of neurons. Interacts with CACNG2; this interaction mediates traffick to the plasma membrane and modulation of desensitization. Interacts with CNIH2 and CNIH3; this interaction promotes expression at the plasma membrane and extensively modulates their gating properties by slowing deactivation and desensitization kinetics. Found in a complex with GRIA2, GRIA3, GRIA4, DLG4, CACNG8 and CNIH2. Post-translationally, phosphorylated at Ser-645. Phosphorylated at Ser-710 by PKC. Phosphorylated at Ser-849 by PKC, PKA and CAMK2. Phosphorylated at Ser-863 by PKC, PKA and PRKG2. Phosphorylation of Ser-863 is reduced by induction of long-term depression and increased by induction of long-term potentiation. In terms of processing, palmitoylated. Depalmitoylated by CPT1C and upon L-glutamate stimulation. ZDHHC3/GODZ specifically palmitoylates Cys-603, which leads to Golgi retention and decreased cell surface expression. In contrast, Cys-829 palmitoylation does not affect cell surface expression but regulates stimulation-dependent endocytosis. Expressed in the outer plexiform layer of the retina of the eye (at protein level). Expressed in the forebrain and hippocampus (at protein level).

It is found in the cell membrane. It localises to the endoplasmic reticulum membrane. Its subcellular location is the postsynaptic cell membrane. The protein resides in the postsynaptic density membrane. The protein localises to the cell projection. It is found in the dendrite. It localises to the dendritic spine. Its subcellular location is the early endosome membrane. The protein resides in the recycling endosome membrane. The protein localises to the presynapse. It is found in the synapse. It carries out the reaction Ca(2+)(in) = Ca(2+)(out). The enzyme catalyses Na(+)(in) = Na(+)(out). It catalyses the reaction Mg(2+)(in) = Mg(2+)(out). The catalysed reaction is Li(+)(in) = Li(+)(out). It carries out the reaction K(+)(in) = K(+)(out). The enzyme catalyses Sr(2+)(in) = Sr(2+)(out). Its function is as follows. Ionotropic glutamate receptor that functions as a ligand-gated cation channel, gated by L-glutamate and glutamatergic agonists such as alpha-amino-3-hydroxy-5-methyl-4-isoxazolepropionic acid (AMPA), quisqualic acid, and kainic acid. L-glutamate acts as an excitatory neurotransmitter at many synapses in the central nervous system. Binding of the excitatory neurotransmitter L-glutamate induces a conformation change, leading to the opening of the cation channel, and thereby converts the chemical signal to an electrical impulse upon entry of monovalent and divalent cations such as sodium and calcium. The receptor then desensitizes rapidly and enters in a transient inactive state, characterized by the presence of bound agonist. In the presence of CACNG2 or CACNG4 or CACNG7 or CACNG8, shows resensitization which is characterized by a delayed accumulation of current flux upon continued application of L-glutamate. Calcium (Ca(2+)) permeability depends on subunits composition and, heteromeric channels containing edited GRIA2 subunit are calcium-impermeable. Also permeable to other divalents cations such as strontium(2+) and magnesium(2+) and monovalent cations such as potassium(1+) and lithium(1+). The polypeptide is Glutamate receptor 1 (Mus musculus (Mouse)).